The sequence spans 202 residues: ATP-dependent Clp protease proteolytic subunit (202 aa).

Serine 106 serves as the catalytic Nucleophile. The active site involves histidine 131.

This sequence belongs to the peptidase S14 family. In terms of assembly, fourteen ClpP subunits assemble into 2 heptameric rings which stack back to back to give a disk-like structure with a central cavity, resembling the structure of eukaryotic proteasomes.

The protein resides in the cytoplasm. The enzyme catalyses Hydrolysis of proteins to small peptides in the presence of ATP and magnesium. alpha-casein is the usual test substrate. In the absence of ATP, only oligopeptides shorter than five residues are hydrolyzed (such as succinyl-Leu-Tyr-|-NHMec, and Leu-Tyr-Leu-|-Tyr-Trp, in which cleavage of the -Tyr-|-Leu- and -Tyr-|-Trp bonds also occurs).. Its function is as follows. Cleaves peptides in various proteins in a process that requires ATP hydrolysis. Has a chymotrypsin-like activity. Plays a major role in the degradation of misfolded proteins. This chain is ATP-dependent Clp protease proteolytic subunit, found in Acidovorax ebreus (strain TPSY) (Diaphorobacter sp. (strain TPSY)).